A 221-amino-acid polypeptide reads, in one-letter code: Josephin-like protein (221 aa).

The interval Met1–His37 is disordered. Residues Leu9 to Gly20 are compositionally biased toward low complexity. Residues Pro36 to Trp214 enclose the Josephin domain. The active-site Nucleophile is the Cys49. Residue His152 is the Proton acceptor of the active site.

The catalysed reaction is Thiol-dependent hydrolysis of ester, thioester, amide, peptide and isopeptide bonds formed by the C-terminal Gly of ubiquitin (a 76-residue protein attached to proteins as an intracellular targeting signal).. Functionally, may act as a deubiquitinating enzyme. This is Josephin-like protein from Drosophila melanogaster (Fruit fly).